The sequence spans 252 residues: tRNA pseudouridine synthase A (252 aa).

The active-site Nucleophile is Asp-52. Residue Tyr-111 coordinates substrate.

Belongs to the tRNA pseudouridine synthase TruA family. Homodimer.

It catalyses the reaction uridine(38/39/40) in tRNA = pseudouridine(38/39/40) in tRNA. In terms of biological role, formation of pseudouridine at positions 38, 39 and 40 in the anticodon stem and loop of transfer RNAs. This chain is tRNA pseudouridine synthase A, found in Parabacteroides distasonis (strain ATCC 8503 / DSM 20701 / CIP 104284 / JCM 5825 / NCTC 11152).